The chain runs to 74 residues: Brevinin-2Ta (74 aa).

Residues 1-22 (MFTMKKSLLLFFFLGTISLSLC) form the signal peptide. A propeptide spanning residues 23 to 41 (QEERNADEDDGEMTEEEKR) is cleaved from the precursor. The cysteines at positions 68 and 74 are disulfide-linked.

Belongs to the frog skin active peptide (FSAP) family. Brevinin subfamily. As to expression, expressed by the skin glands.

The protein resides in the secreted. Antimicrobial peptide. This is Brevinin-2Ta from Rana temporaria (European common frog).